Reading from the N-terminus, the 329-residue chain is Mas-related G-protein coupled receptor member X2 (329 aa).

Residues 1 to 33 (MDPTTPAWGTESTTMDGNDQSLPLLCDKEALIP) are Extracellular-facing. Residues 34–54 (VFLILFIALVGLVGNGFVLWL) traverse the membrane as a helical segment. Residues 55 to 63 (LGFRMSRNA) are Cytoplasmic-facing. A helical membrane pass occupies residues 64–84 (FSVYVLSLAGADFLFLCFQII). Topologically, residues 85 to 96 (NCLVYLRDFFCS) are extracellular. Residues 97–117 (ISINFPSXFTTVMTCAYLAGL) form a helical membrane-spanning segment. Topologically, residues 118-144 (SMLSTISTERCLSVLWPIWYRCRRPRH) are cytoplasmic. A helical transmembrane segment spans residues 145 to 165 (LSAVVCVLLWALSLLLSILEG). Residues 166–184 (KFCGFLFSDGDFGWCQIFD) lie on the Extracellular side of the membrane. The helical transmembrane segment at 185 to 205 (FITAAWLIFLFVVLCASSLAL) threads the bilayer. The Cytoplasmic portion of the chain corresponds to 206 to 228 (LVRILCGSRGLPLTRLYLTILLT). Residues 229–249 (VLVFLLCGLPFGIQWFLILGF) traverse the membrane as a helical segment. Over 250 to 263 (WNSDVLLCHIHLVS) the chain is Extracellular. The helical transmembrane segment at 264–284 (VVLSSLNSSANPIIYFFVGSF) threads the bilayer. Residues 285-329 (RKQWRLQQPILKLAFQRALQDTAEVDHSEGCFPQGTSEMSRSSLV) lie on the Cytoplasmic side of the membrane.

Belongs to the G-protein coupled receptor 1 family. Mas subfamily.

The protein localises to the cell membrane. Functionally, mast cell-specific receptor for basic secretagogues, i.e. cationic amphiphilic drugs, as well as endo- or exogenous peptides, consisting of a basic head group and a hydrophobic core. Recognizes and binds small molecules containing a cyclized tetrahydroisoquinoline (THIQ), such as non-steroidal neuromuscular blocking drugs (NMBDs), including tubocurarine and atracurium. In response to these compounds, mediates pseudo-allergic reactions characterized by histamine release, inflammation and airway contraction. The chain is Mas-related G-protein coupled receptor member X2 (MRGPRX2) from Hoolock hoolock (Western hoolock gibbon).